Consider the following 114-residue polypeptide: MAVNIYDTANQMEQEIRQTSEYKSLQEAFAEVRKDEHASALYSKFQDVQSNLQQKQMNGEELTEEEIKNVHEIADQIEKVDLIKDLMDKERNMNQLFSDVSQIIVKPIQELYKN.

This sequence belongs to the UPF0342 family.

This Pediococcus pentosaceus (strain ATCC 25745 / CCUG 21536 / LMG 10740 / 183-1w) protein is UPF0342 protein PEPE_0673.